We begin with the raw amino-acid sequence, 296 residues long: Biliverdin reductase A (296 aa).

Residues 1–2 (MN) constitute a propeptide that is removed on maturation. NADP(+)-binding positions include 16 to 19 (VGRA), 44 to 46 (SRR), 77 to 80 (SSSH), and Tyr-98. Position 174 is a phosphothreonine (Thr-174). Residues Ser-178 and Ser-230 each carry the phosphoserine modification. Lys-248 and Lys-253 each carry N6-acetyllysine. 4 residues coordinate Zn(2+): His-280, Cys-281, Cys-292, and Cys-293.

Belongs to the Gfo/Idh/MocA family. Biliverdin reductase subfamily. Monomer. Zn(2+) serves as cofactor. In terms of tissue distribution, liver.

It is found in the cytoplasm. Its subcellular location is the cytosol. It carries out the reaction (4Z,15Z)-bilirubin IXalpha + NAD(+) = biliverdin IXalpha + NADH + H(+). The catalysed reaction is (4Z,15Z)-bilirubin IXalpha + NADP(+) = biliverdin IXalpha + NADPH + H(+). It participates in porphyrin-containing compound metabolism; protoheme degradation. In terms of biological role, reduces the gamma-methene bridge of the open tetrapyrrole, biliverdin IXalpha, to bilirubin with the concomitant oxidation of a NADH or NADPH cofactor. Does not reduce bilirubin IXbeta. Uses the reactants NADH or NADPH depending on the pH; NADH is used at the acidic pH range (6-6.9) and NADPH at the alkaline range (8.5-8.7). NADPH, however, is the probable reactant in biological systems. This chain is Biliverdin reductase A, found in Homo sapiens (Human).